A 327-amino-acid chain; its full sequence is Phenylalanine--tRNA ligase alpha subunit (327 aa).

Mg(2+) is bound at residue Glu252.

It belongs to the class-II aminoacyl-tRNA synthetase family. Phe-tRNA synthetase alpha subunit type 1 subfamily. In terms of assembly, tetramer of two alpha and two beta subunits. Requires Mg(2+) as cofactor.

The protein localises to the cytoplasm. The catalysed reaction is tRNA(Phe) + L-phenylalanine + ATP = L-phenylalanyl-tRNA(Phe) + AMP + diphosphate + H(+). The sequence is that of Phenylalanine--tRNA ligase alpha subunit from Tolumonas auensis (strain DSM 9187 / NBRC 110442 / TA 4).